Reading from the N-terminus, the 118-residue chain is MNPEEIRQRRLQEMQAKAQEQGAEDPEAQRQAQEQQMQYEMQKQKILRQILSEDARSRLARIKLAKPQFAEHVEMQLIQLAQAGKLPVPLTDEYFKGLLDRIYEMNRPAKKEITIMRK.

Residues 1–12 (MNPEEIRQRRLQ) are compositionally biased toward basic and acidic residues. The interval 1–35 (MNPEEIRQRRLQEMQAKAQEQGAEDPEAQRQAQEQ) is disordered.

It belongs to the PDCD5 family.

This is DNA-binding protein MmarC5_1518 from Methanococcus maripaludis (strain C5 / ATCC BAA-1333).